The following is a 163-amino-acid chain: Large ribosomal subunit protein uL10 (163 aa).

This sequence belongs to the universal ribosomal protein uL10 family. As to quaternary structure, part of the ribosomal stalk of the 50S ribosomal subunit. The N-terminus interacts with L11 and the large rRNA to form the base of the stalk. The C-terminus forms an elongated spine to which L12 dimers bind in a sequential fashion forming a multimeric L10(L12)X complex.

Forms part of the ribosomal stalk, playing a central role in the interaction of the ribosome with GTP-bound translation factors. This chain is Large ribosomal subunit protein uL10, found in Haemophilus influenzae (strain PittEE).